We begin with the raw amino-acid sequence, 339 residues long: Serine/arginine-rich splicing factor 6 (339 aa).

An RRM 1 domain is found at 2–72; the sequence is PRVYIGRLSY…ERVIVEHARG (71 aa). Residues serine 45, serine 81, and serine 84 each carry the phosphoserine modification. Residues 75–103 are disordered; sequence RDRDGYSYGSRSGGGGYSSRRTSGRDKYG. Residues 110–183 enclose the RRM 2 domain; the sequence is YRLIVENLSS…RNIRLIEDKP (74 aa). N6-acetyllysine is present on lysine 165. The tract at residues 176–339 is disordered; sequence IRLIEDKPRT…RSRSRSSSRD (164 aa). Lysine 182 participates in a covalent cross-link: Glycyl lysine isopeptide (Lys-Gly) (interchain with G-Cter in SUMO2). Basic residues predominate over residues 185-250; it reads TSHRRSYSGS…RKSRSKSKSK (66 aa). Basic and acidic residues predominate over residues 280 to 291; the sequence is SPKENGKGDIKS. 2 positions are modified to phosphoserine: serine 297 and serine 299. At serine 303 the chain carries Phosphoserine; by DYRK1A. Serine 314 and serine 316 each carry phosphoserine. A compositionally biased stretch (basic residues) spans 321–339; that stretch reads RASRSRSRSRSRSRSSSRD.

It belongs to the splicing factor SR family. As to quaternary structure, binds SREK1/SFRS12. Interacts with DYRK1A. Interacts with RBMY; the interaction inhibits SRSF6 pre-mRNA splicing. In terms of processing, extensively phosphorylated on serine residues in the RS domain. Phosphorylated by DYRK1A, probably in the RS domain. Phosphorylation by DYRK1A modulates alternative splice site selection and inhibits the expression of MAPT/Tau exon 10.

Its subcellular location is the nucleus. The protein localises to the nucleus speckle. Functionally, plays a role in constitutive splicing and modulates the selection of alternative splice sites. Plays a role in the alternative splicing of MAPT/Tau exon 10. Binds to alternative exons of TNC pre-mRNA and promotes the expression of alternatively spliced TNC. Plays a role in wound healing and in the regulation of keratinocyte differentiation and proliferation via its role in alternative splicing. The chain is Serine/arginine-rich splicing factor 6 (Srsf6) from Mus musculus (Mouse).